The sequence spans 148 residues: uncharacterized protein (148 aa).

[4Fe-4S] cluster is bound by residues Cys21, Cys24, Cys88, and Cys117.

It belongs to the complex I 20 kDa subunit family. It depends on [4Fe-4S] cluster as a cofactor.

This is an uncharacterized protein from Methanocaldococcus jannaschii (strain ATCC 43067 / DSM 2661 / JAL-1 / JCM 10045 / NBRC 100440) (Methanococcus jannaschii).